A 165-amino-acid chain; its full sequence is Nucleotide-binding protein TGRD_519 (165 aa).

It belongs to the YajQ family.

Nucleotide-binding protein. This chain is Nucleotide-binding protein TGRD_519, found in Endomicrobium trichonymphae.